We begin with the raw amino-acid sequence, 386 residues long: S-adenosylmethionine:tRNA ribosyltransferase-isomerase (386 aa).

Belongs to the QueA family. As to quaternary structure, monomer.

The protein localises to the cytoplasm. It carries out the reaction 7-aminomethyl-7-carbaguanosine(34) in tRNA + S-adenosyl-L-methionine = epoxyqueuosine(34) in tRNA + adenine + L-methionine + 2 H(+). It participates in tRNA modification; tRNA-queuosine biosynthesis. Its function is as follows. Transfers and isomerizes the ribose moiety from AdoMet to the 7-aminomethyl group of 7-deazaguanine (preQ1-tRNA) to give epoxyqueuosine (oQ-tRNA). This chain is S-adenosylmethionine:tRNA ribosyltransferase-isomerase, found in Rickettsia canadensis (strain McKiel).